A 568-amino-acid polypeptide reads, in one-letter code: Glucose-6-phosphate isomerase, cytosolic 1 (568 aa).

Catalysis depends on Glu360, which acts as the Proton donor. Catalysis depends on residues His391 and Lys516.

It belongs to the GPI family. In terms of assembly, homodimer.

The protein localises to the cytoplasm. The enzyme catalyses alpha-D-glucose 6-phosphate = beta-D-fructose 6-phosphate. It functions in the pathway carbohydrate degradation; glycolysis; D-glyceraldehyde 3-phosphate and glycerone phosphate from D-glucose: step 2/4. This Clarkia arcuata (Glandular clarkia) protein is Glucose-6-phosphate isomerase, cytosolic 1 (PGIC1).